The following is a 192-amino-acid chain: MITISDTAQAHFVKLLADQPEGTHIRVFVISPGTAQAECGVSYCPPDAAEADDVELPFNGFSAMVDEKSAPFLDDASIDFVTDQLGSQLTLKAPNAKMRKVSGDAPLVERIEYIIQSEINPQLASHGGNIMLVEITEAGVAVLQFGGGCNGCSQVDITLKDGIEKQLLDMFPTELTGVRDVTEHEHGEHSYA.

[4Fe-4S] cluster is bound by residues cysteine 149 and cysteine 152.

This sequence belongs to the NfuA family. In terms of assembly, homodimer. [4Fe-4S] cluster serves as cofactor.

Involved in iron-sulfur cluster biogenesis. Binds a 4Fe-4S cluster, can transfer this cluster to apoproteins, and thereby intervenes in the maturation of Fe/S proteins. Could also act as a scaffold/chaperone for damaged Fe/S proteins. The polypeptide is Fe/S biogenesis protein NfuA (Shewanella frigidimarina (strain NCIMB 400)).